A 253-amino-acid chain; its full sequence is Sporulated oocyst TA4 antigen (253 aa).

The first 23 residues, 1 to 23, serve as a signal peptide directing secretion; the sequence is MARLSFVSLLSLSLLFGQQAVRA. Residues 182–184 constitute a propeptide, removed in mature form; the sequence is RRL.

In terms of assembly, the TA4 antigen is composed of a 17 kDa and a 8 kDa chain, linked by a disulfide bond.

The protein is Sporulated oocyst TA4 antigen of Eimeria tenella (Coccidian parasite).